Consider the following 398-residue polypeptide: Acetate kinase (398 aa).

Position 9 (N9) interacts with Mg(2+). K16 contacts ATP. R93 provides a ligand contact to substrate. D150 acts as the Proton donor/acceptor in catalysis. Residues 209–213 (HLGAG), 284–286 (DMR), and 329–333 (GIGEH) contribute to the ATP site. E382 contributes to the Mg(2+) binding site.

This sequence belongs to the acetokinase family. In terms of assembly, homodimer. The cofactor is Mg(2+). It depends on Mn(2+) as a cofactor.

Its subcellular location is the cytoplasm. It carries out the reaction acetate + ATP = acetyl phosphate + ADP. It functions in the pathway metabolic intermediate biosynthesis; acetyl-CoA biosynthesis; acetyl-CoA from acetate: step 1/2. Catalyzes the formation of acetyl phosphate from acetate and ATP. Can also catalyze the reverse reaction. The polypeptide is Acetate kinase (Rhodopseudomonas palustris (strain ATCC BAA-98 / CGA009)).